The sequence spans 141 residues: HTH-type transcriptional repressor NsrR (141 aa).

In terms of domain architecture, HTH rrf2-type spans glutamine 2–glutamate 129. The H-T-H motif DNA-binding region spans isoleucine 28–arginine 51. Residues cysteine 91, cysteine 96, and cysteine 102 each coordinate [2Fe-2S] cluster.

[2Fe-2S] cluster is required as a cofactor.

Its function is as follows. Nitric oxide-sensitive repressor of genes involved in protecting the cell against nitrosative stress. May require iron for activity. The protein is HTH-type transcriptional repressor NsrR of Escherichia fergusonii (strain ATCC 35469 / DSM 13698 / CCUG 18766 / IAM 14443 / JCM 21226 / LMG 7866 / NBRC 102419 / NCTC 12128 / CDC 0568-73).